A 349-amino-acid chain; its full sequence is MNITSKIGAIAAAGAVGLGLTACGAGDTAANSDTKRIGVTVYDMSSFITEGKEGMDTYAKANNIELVWNSANNDVSTQASQVDSLINQGVDAIIVVPVQADSLGPQVASAKSKGIPLLAVNAALETPDLAGNVQPDDVAAGAQEMQMMADRLGGKGNIVILQGPLGGSGEINRGKGIDQVLAKYPDIKVLAKDTANWKRDEAVNKMKNWISSFGPQIDGVVAQNDDMGLGALQALKEAGRTGVPIVGIDGIEDGLNAVKSGDFIGTSLQNGTVELSAGLAVADALVKGEDVKTDPVYVMPAITKDNVDVAIEHVVTERQKFLDGLVELTQQNLKTGDIAYEGIPGQTQP.

The signal sequence occupies residues Met-1–Ala-22. Cys-23 carries the N-palmitoyl cysteine lipid modification. The S-diacylglycerol cysteine moiety is linked to residue Cys-23. The xylitol site is built by Tyr-42, Asn-121, Arg-173, Asn-224, Asp-249, and Gln-269.

Belongs to the bacterial solute-binding protein 2 family.

It is found in the cell membrane. In terms of biological role, part of an ABC transporter complex likely involved in xylitol import. Binds xylitol. The polypeptide is Xylitol-binding protein (Mycolicibacterium smegmatis (strain ATCC 700084 / mc(2)155) (Mycobacterium smegmatis)).